A 396-amino-acid polypeptide reads, in one-letter code: Ribosomal RNA large subunit methyltransferase G (396 aa).

This sequence belongs to the methyltransferase superfamily. RlmG family.

It is found in the cytoplasm. The enzyme catalyses guanosine(1835) in 23S rRNA + S-adenosyl-L-methionine = N(2)-methylguanosine(1835) in 23S rRNA + S-adenosyl-L-homocysteine + H(+). Specifically methylates the guanine in position 1835 (m2G1835) of 23S rRNA. This is Ribosomal RNA large subunit methyltransferase G from Yersinia enterocolitica serotype O:8 / biotype 1B (strain NCTC 13174 / 8081).